Here is a 939-residue protein sequence, read N- to C-terminus: Aconitate hydratase A (939 aa).

The segment at 433 to 453 (GSGESLATGAEGRPSKPVTVA) is disordered. The [4Fe-4S] cluster site is built by C475, C541, and C544.

The protein belongs to the aconitase/IPM isomerase family. Monomer. It depends on [4Fe-4S] cluster as a cofactor.

The enzyme catalyses citrate = D-threo-isocitrate. The catalysed reaction is (2S,3R)-3-hydroxybutane-1,2,3-tricarboxylate = 2-methyl-cis-aconitate + H2O. Its pathway is carbohydrate metabolism; tricarboxylic acid cycle; isocitrate from oxaloacetate: step 2/2. The protein operates within organic acid metabolism; propanoate degradation. Its function is as follows. Involved in the catabolism of short chain fatty acids (SCFA) via the tricarboxylic acid (TCA)(acetyl degradation route) and probably via the 2-methylcitrate cycle I (propionate degradation route). Catalyzes the reversible isomerization of citrate to isocitrate via cis-aconitate. Could catalyze the hydration of 2-methyl-cis-aconitate to yield (2R,3S)-2-methylisocitrate. The apo form of AcnA functions as a RNA-binding regulatory protein. This chain is Aconitate hydratase A (acn), found in Corynebacterium glutamicum (strain ATCC 13032 / DSM 20300 / JCM 1318 / BCRC 11384 / CCUG 27702 / LMG 3730 / NBRC 12168 / NCIMB 10025 / NRRL B-2784 / 534).